Here is a 428-residue protein sequence, read N- to C-terminus: Histone deacetylase 3 (428 aa).

The histone deacetylase stretch occupies residues 3–316 (KTVAYFYDPD…WTYETSLLVD (314 aa)). 1D-myo-inositol 1,4,5,6-tetrakisphosphate contacts are provided by histidine 17, glycine 21, and lysine 25. Histidine 135 is an active-site residue. The Zn(2+) site is built by aspartate 170, histidine 172, and aspartate 259. Arginine 265 serves as a coordination point for 1D-myo-inositol 1,4,5,6-tetrakisphosphate. Basic and acidic residues-rich tracts occupy residues 386-405 (SYER…DNYS) and 415-428 (DGDH…DVEI). The segment at 386–428 (SYERTDEPDPEERGSEDNYSRPEASNEFYDGDHDNDKESDVEI) is disordered.

It belongs to the histone deacetylase family. HD type 1 subfamily.

The protein resides in the nucleus. Its subcellular location is the chromosome. It is found in the cytoplasm. The protein localises to the cytosol. It carries out the reaction N(6)-acetyl-L-lysyl-[histone] + H2O = L-lysyl-[histone] + acetate. It catalyses the reaction N(6)-acetyl-L-lysyl-[protein] + H2O = L-lysyl-[protein] + acetate. The catalysed reaction is N(6)-(2E)-butenoyl-L-lysyl-[protein] + H2O = (2E)-2-butenoate + L-lysyl-[protein]. The enzyme catalyses N(6)-(2-hydroxyisobutanoyl)-L-lysyl-[protein] + H2O = 2-hydroxy-2-methylpropanoate + L-lysyl-[protein]. It carries out the reaction N(6)-[(S)-lactoyl]-L-lysyl-[protein] + H2O = (S)-lactate + L-lysyl-[protein]. Its activity is regulated as follows. Inositol tetraphosphate (1D-myo-inositol 1,4,5,6-tetrakisphosphate) promotes the histone deacetylase activity by acting as an intermolecular glue between hdac3 and N-Cor repressor complex components. Histone deacetylase that catalyzes the deacetylation of lysine residues on the N-terminal part of the core histones (H2A, H2B, H3 and H4), and some other non-histone substrates. Histone deacetylation gives a tag for epigenetic repression and plays an important role in transcriptional regulation, cell cycle progression and developmental events. Histone deacetylases act via the formation of large multiprotein complexes, such as N-Cor repressor complex, which activate the histone deacetylase activity. Participates in the BCL6 transcriptional repressor activity by deacetylating the H3 'Lys-27' (H3K27) on enhancer elements, antagonizing EP300 acetyltransferase activity and repressing proximal gene expression. Also functions as a deacetylase for non-histone targets. In addition to protein deacetylase activity, also acts as a protein-lysine deacylase by recognizing other acyl groups: catalyzes removal of (2E)-butenoyl (crotonyl), lactoyl (lactyl) and 2-hydroxyisobutanoyl (2-hydroxyisobutyryl) acyl groups from lysine residues, leading to protein decrotonylation, delactylation and de-2-hydroxyisobutyrylation, respectively. The protein is Histone deacetylase 3 (hdac3) of Xenopus tropicalis (Western clawed frog).